We begin with the raw amino-acid sequence, 201 residues long: Holliday junction branch migration complex subunit RuvA (201 aa).

Residues Met1–Ala64 form a domain I region. The interval Glu65 to Thr143 is domain II. The tract at residues Leu144 to Thr152 is flexible linker. Residues Ala153–Val201 form a domain III region.

This sequence belongs to the RuvA family. In terms of assembly, homotetramer. Forms an RuvA(8)-RuvB(12)-Holliday junction (HJ) complex. HJ DNA is sandwiched between 2 RuvA tetramers; dsDNA enters through RuvA and exits via RuvB. An RuvB hexamer assembles on each DNA strand where it exits the tetramer. Each RuvB hexamer is contacted by two RuvA subunits (via domain III) on 2 adjacent RuvB subunits; this complex drives branch migration. In the full resolvosome a probable DNA-RuvA(4)-RuvB(12)-RuvC(2) complex forms which resolves the HJ.

It localises to the cytoplasm. Its function is as follows. The RuvA-RuvB-RuvC complex processes Holliday junction (HJ) DNA during genetic recombination and DNA repair, while the RuvA-RuvB complex plays an important role in the rescue of blocked DNA replication forks via replication fork reversal (RFR). RuvA specifically binds to HJ cruciform DNA, conferring on it an open structure. The RuvB hexamer acts as an ATP-dependent pump, pulling dsDNA into and through the RuvAB complex. HJ branch migration allows RuvC to scan DNA until it finds its consensus sequence, where it cleaves and resolves the cruciform DNA. In Stutzerimonas stutzeri (strain A1501) (Pseudomonas stutzeri), this protein is Holliday junction branch migration complex subunit RuvA.